We begin with the raw amino-acid sequence, 486 residues long: Hexosaminidase D (486 aa).

The active-site Proton donor is Glu149.

The protein belongs to the glycosyl hydrolase 20 family. In terms of assembly, homodimer; disulfide-linked. In terms of tissue distribution, expressed in synovial fibroblasts and synovial membranes.

The protein localises to the cytoplasm. Its subcellular location is the nucleus. It localises to the extracellular vesicle. The enzyme catalyses Hydrolysis of terminal non-reducing N-acetyl-D-hexosamine residues in N-acetyl-beta-D-hexosaminides.. Inhibited by O-(2-acetamido-2-deoxy-D-glucopyranosylidene)amino N-phenylcarbamate (PUGNAc). Inhibited by galacto-NAG-thiazoline. Its function is as follows. Has hexosaminidase activity. Responsible for the cleavage of the monosaccharides N-acetylglucosamine (GlcNAc) and N-acetylgalactosamine (GalNAc) from cellular substrates. Has a preference for galactosaminide over glucosaminide substrates. This is Hexosaminidase D from Homo sapiens (Human).